A 249-amino-acid polypeptide reads, in one-letter code: ATP-dependent Clp protease proteolytic subunit (249 aa).

Ser-107 functions as the Nucleophile in the catalytic mechanism. The active site involves His-132. Positions 212–249 (ESASQDNSLDPDAPDESASQDNSLDPDAPDETRPPKLR) are disordered.

It belongs to the peptidase S14 family. Component of the chloroplastic Clp protease core complex.

It localises to the plastid. It is found in the chloroplast stroma. It carries out the reaction Hydrolysis of proteins to small peptides in the presence of ATP and magnesium. alpha-casein is the usual test substrate. In the absence of ATP, only oligopeptides shorter than five residues are hydrolyzed (such as succinyl-Leu-Tyr-|-NHMec, and Leu-Tyr-Leu-|-Tyr-Trp, in which cleavage of the -Tyr-|-Leu- and -Tyr-|-Trp bonds also occurs).. Its function is as follows. Cleaves peptides in various proteins in a process that requires ATP hydrolysis. Has a chymotrypsin-like activity. Plays a major role in the degradation of misfolded proteins. This is ATP-dependent Clp protease proteolytic subunit from Oenothera elata subsp. hookeri (Hooker's evening primrose).